The following is a 430-amino-acid chain: Stress protein DDR48 (430 aa).

The interval 1 to 430 is disordered; sequence MGLFDKVKQF…RNQYGGDDDY (430 aa). Residues 12–27 show a composition bias toward low complexity; that stretch reads NSNNNNNDSGNNNQGD. The segment covering 37–60 has biased composition (basic and acidic residues); that stretch reads GEDRVNQFKSKIGEDRFDKMESKV. Low complexity predominate over residues 70-421; it reads NDNDSNNNDS…SYGSSNRGGR (352 aa). 6 tandem repeats follow at residues 74–81, 82–89, 90–97, 98–105, 106–113, and 114–121. A 38 X 8 AA approximate tandem repeats of S-[NS]-N-[ND]-D-S-Y-G region spans residues 74 to 414; it reads SNNNDSYGSN…GSSNNDDSYG (341 aa). The stretch at 124-131 is one 7; approximate repeat; that stretch reads NKKKSSYG. A run of 5 repeats spans residues 132-139, 141-148, 149-156, 157-164, and 165-172. The 13; approximate repeat unit spans residues 175-182; sequence NKNKSSYG. Ser183 and Ser191 each carry phosphoserine. A run of 2 repeats spans residues 183–190 and 191–198. Residues 201–208 form a 16; approximate repeat; sequence NKKKSSYG. Repeat copies occupy residues 209-216, 217-224, 225-232, and 233-240. A 21; approximate repeat occupies 243–250; sequence NKKKSSYG. 3 repeat units span residues 251-258, 260-267, and 268-275. A 25; approximate repeat occupies 278 to 285; sequence NKNKSSYG. 2 repeat units span residues 287–294 and 296–303. Residues 306–313 form a 28; approximate repeat; the sequence is NKKKSSYG. Ser314 and Ser322 each carry phosphoserine. 2 tandem repeats follow at residues 314 to 321 and 322 to 329. The 31; approximate repeat unit spans residues 332–339; the sequence is NKKKSSYG. A run of 2 repeats spans residues 340–347 and 348–355. The stretch at 358 to 365 is one 34; approximate repeat; it reads NKKKSSYG. 2 consecutive repeat copies span residues 366-373 and 375-382. One copy of the 37; approximate repeat lies at 393-400; the sequence is NRNKNSYG. Repeat 38 spans residues 407–414; the sequence is SNNDDSYG.

The protein belongs to the DDR48 family. Post-translationally, probably highly glycosylated.

In terms of biological role, DNA damage-responsive protein that may be required for maintaining the rate of spontaneous mutagenesis. Shows low ATP and GTP hydrolysis activity. Dispensable for acquisition of thermotolerance and does not play a significant role in recovery or protection of cells from acute heat shock. This Saccharomyces cerevisiae (strain ATCC 204508 / S288c) (Baker's yeast) protein is Stress protein DDR48 (DDR48).